The following is a 399-amino-acid chain: Probable sugar efflux transporter (399 aa).

The next 12 membrane-spanning stretches (helical) occupy residues valine 15 to leucine 35, valine 50 to leucine 70, leucine 81 to phenylalanine 101, valine 103 to serine 123, alanine 136 to isoleucine 156, methionine 168 to leucine 188, proline 209 to tyrosine 229, phenylalanine 246 to glycine 266, alanine 273 to proline 293, leucine 301 to valine 321, valine 333 to glycine 353, and serine 364 to phenylalanine 384.

This sequence belongs to the major facilitator superfamily. SotB (TC 2.A.1.2) family.

Its subcellular location is the cell inner membrane. Functionally, involved in the efflux of sugars. The physiological role may be the reduction of the intracellular concentration of toxic sugars or sugar metabolites. This Klebsiella pneumoniae subsp. pneumoniae (strain ATCC 700721 / MGH 78578) protein is Probable sugar efflux transporter.